A 769-amino-acid polypeptide reads, in one-letter code: Endonuclease MutS2 (769 aa).

335–342 is a binding site for ATP; sequence GGNAGGKT. The Smr domain occupies 694–769; the sequence is IDLRGKRADV…GDGMTEVELV (76 aa).

Belongs to the DNA mismatch repair MutS family. MutS2 subfamily. As to quaternary structure, homodimer. Binds to stalled ribosomes, contacting rRNA.

Functionally, endonuclease that is involved in the suppression of homologous recombination and thus may have a key role in the control of bacterial genetic diversity. Acts as a ribosome collision sensor, splitting the ribosome into its 2 subunits. Detects stalled/collided 70S ribosomes which it binds and splits by an ATP-hydrolysis driven conformational change. Acts upstream of the ribosome quality control system (RQC), a ribosome-associated complex that mediates the extraction of incompletely synthesized nascent chains from stalled ribosomes and their subsequent degradation. Probably generates substrates for RQC. This Maridesulfovibrio salexigens (strain ATCC 14822 / DSM 2638 / NCIMB 8403 / VKM B-1763) (Desulfovibrio salexigens) protein is Endonuclease MutS2.